A 368-amino-acid chain; its full sequence is High affinity transport system protein p37 (368 aa).

Positions 1 to 25 (MLFKKFTWVIPSLFLTIISTSLLIS) are cleaved as a signal peptide. The N-palmitoyl cysteine moiety is linked to residue C26. Residue C26 is the site of S-diacylglycerol cysteine attachment.

Its subcellular location is the cell membrane. P37 is part of a high-affinity transport system. The sequence is that of High affinity transport system protein p37 (p37) from Mycoplasma genitalium (strain ATCC 33530 / DSM 19775 / NCTC 10195 / G37) (Mycoplasmoides genitalium).